The primary structure comprises 433 residues: Probable glycine dehydrogenase (decarboxylating) subunit 1 (433 aa).

The protein belongs to the GcvP family. N-terminal subunit subfamily. In terms of assembly, the glycine cleavage system is composed of four proteins: P, T, L and H. In this organism, the P 'protein' is a heterodimer of two subunits.

The catalysed reaction is N(6)-[(R)-lipoyl]-L-lysyl-[glycine-cleavage complex H protein] + glycine + H(+) = N(6)-[(R)-S(8)-aminomethyldihydrolipoyl]-L-lysyl-[glycine-cleavage complex H protein] + CO2. The glycine cleavage system catalyzes the degradation of glycine. The P protein binds the alpha-amino group of glycine through its pyridoxal phosphate cofactor; CO(2) is released and the remaining methylamine moiety is then transferred to the lipoamide cofactor of the H protein. This Thermoplasma acidophilum (strain ATCC 25905 / DSM 1728 / JCM 9062 / NBRC 15155 / AMRC-C165) protein is Probable glycine dehydrogenase (decarboxylating) subunit 1.